The primary structure comprises 419 residues: S-adenosylmethionine synthase (419 aa).

ATP is bound at residue His-14. Mg(2+) is bound at residue Asp-16. Glu-42 provides a ligand contact to K(+). Glu-55 and Gln-98 together coordinate L-methionine. Residues 98–108 form a flexible loop region; the sequence is QSQDIYQGVDR. Residues 164 to 166, 242 to 243, Asp-251, 257 to 258, Ala-274, and Lys-278 each bind ATP; these read DSK, KF, and RK. Asp-251 serves as a coordination point for L-methionine. Position 282 (Lys-282) interacts with L-methionine.

Belongs to the AdoMet synthase family. Homotetramer; dimer of dimers. Mg(2+) is required as a cofactor. It depends on K(+) as a cofactor.

It is found in the cytoplasm. The enzyme catalyses L-methionine + ATP + H2O = S-adenosyl-L-methionine + phosphate + diphosphate. It participates in amino-acid biosynthesis; S-adenosyl-L-methionine biosynthesis; S-adenosyl-L-methionine from L-methionine: step 1/1. Functionally, catalyzes the formation of S-adenosylmethionine (AdoMet) from methionine and ATP. The overall synthetic reaction is composed of two sequential steps, AdoMet formation and the subsequent tripolyphosphate hydrolysis which occurs prior to release of AdoMet from the enzyme. This is S-adenosylmethionine synthase from Christiangramia forsetii (strain DSM 17595 / CGMCC 1.15422 / KT0803) (Gramella forsetii).